Reading from the N-terminus, the 81-residue chain is Trefoil factor 3 (81 aa).

The signal sequence occupies residues 1-23 (MEARTFWLLVVAVLALGSSSSTG). Residues 31 to 74 (NQCAVPAKDRVDCGYPEVTPEQCNNRGCCFDSSIHGVPWCFKPL) form the P-type domain. Cystine bridges form between C33–C59, C43–C58, and C53–C70.

In terms of assembly, monomer. Homodimer; disulfide-linked.

The protein resides in the secreted. Its subcellular location is the extracellular space. It localises to the extracellular matrix. It is found in the cytoplasm. Its function is as follows. Involved in the maintenance and repair of the intestinal mucosa. Promotes the mobility of epithelial cells in healing processes (motogen). The polypeptide is Trefoil factor 3 (TFF3) (Bos taurus (Bovine)).